The primary structure comprises 492 residues: MTDLTTLDAAELAGKIHSREVSSVEVTQAHLDRIAAVDTEYHAFLHVAGEQALEAAAAVDNSLAGGNEPASALAGVPIALKDIFTTTDMPTTCASKILEGWVAPYDATLTSKLRAAGIPILGKTNLDEFAMGSSTENSAFGPTRNPWDVTRIPGGSGGGSAAALASRQAPLAIGTDTGGSIRQPAAVTATVGTKPTYGTVSRFGLVACASSLDQGGPCGRTVLDTALLHEVIAGHDPRDSTSIDAPVRPVVAAAREGAAGDLRGVKVGVVKELHSDSYQPGVIASFDAAVEQLKALGAEVVEVSCPSFEHALASYYLVLPSEVSSNLARFDAMRYGLRVDEGNMSADQVMAATRAAGFGPEVKRRIMIGTYALSSGYYDAYYGSALKVRTLIARDFDKAYEKVDVLVSPTSPFTPWKLGEKVGDPLAMYLSDLCTLPTNLAGHCAMSVPSGLSADDNLPVGLQIMAPAMADERLYRVGAAYEAARGPIATAV.

Catalysis depends on charge relay system residues K81 and S156. S180 serves as the catalytic Acyl-ester intermediate.

The protein belongs to the amidase family. GatA subfamily. In terms of assembly, heterotrimer of A, B and C subunits.

It catalyses the reaction L-glutamyl-tRNA(Gln) + L-glutamine + ATP + H2O = L-glutaminyl-tRNA(Gln) + L-glutamate + ADP + phosphate + H(+). Its function is as follows. Allows the formation of correctly charged Gln-tRNA(Gln) through the transamidation of misacylated Glu-tRNA(Gln) in organisms which lack glutaminyl-tRNA synthetase. The reaction takes place in the presence of glutamine and ATP through an activated gamma-phospho-Glu-tRNA(Gln). The protein is Glutamyl-tRNA(Gln) amidotransferase subunit A of Rhodococcus erythropolis (strain PR4 / NBRC 100887).